The primary structure comprises 99 residues: Large ribosomal subunit protein uL23 (99 aa).

This sequence belongs to the universal ribosomal protein uL23 family. Part of the 50S ribosomal subunit. Contacts protein L29, and trigger factor when it is bound to the ribosome.

Its function is as follows. One of the early assembly proteins it binds 23S rRNA. One of the proteins that surrounds the polypeptide exit tunnel on the outside of the ribosome. Forms the main docking site for trigger factor binding to the ribosome. This chain is Large ribosomal subunit protein uL23, found in Oenococcus oeni (strain ATCC BAA-331 / PSU-1).